A 372-amino-acid polypeptide reads, in one-letter code: Alpha-1,3-mannosyl-glycoprotein 4-beta-N-acetylglucosaminyltransferase-like protein MGAT4D (372 aa).

The Cytoplasmic segment spans residues 1–8 (MKTKNVNL). Residues 9-29 (LFALVAVLLFGFSCFCISRMN) traverse the membrane as a helical; Signal-anchor for type II membrane protein segment. Residues 30 to 372 (QTNNQLINCR…REQHLKDHYY (343 aa)) lie on the Lumenal side of the membrane. Residues N54 and N143 are each glycosylated (N-linked (GlcNAc...) asparagine).

The protein belongs to the glycosyltransferase 54 family. As to quaternary structure, may self-associate; specifically in the endoplasmic reticulum prior to its translocation to the Golgi. Interacts with MGAT1, MGAT3 and MAN2A2; may interact with MGTA1 specifically in the Golgi. In terms of processing, N-glycosylated. O-glycosylated; further modified with terminal sialic acid residues. In terms of tissue distribution, testis.

The protein localises to the golgi apparatus membrane. Its subcellular location is the endoplasmic reticulum membrane. Functionally, may play a role in male spermatogenesis. In vitro acts as inhibitor of MGAT1 activity causing cell surface proteins to carry mainly high mannose N-glycans. The function is mediated by its lumenal domain and occurs specifically in the Golgi. A catalytic glucosyltransferase activity is not detected. May be involved in regulation of Sertoli-germ cell interactions during specific stages of spermatogenesis. This is Alpha-1,3-mannosyl-glycoprotein 4-beta-N-acetylglucosaminyltransferase-like protein MGAT4D from Rattus norvegicus (Rat).